The sequence spans 111 residues: Large ribosomal subunit protein P2-2 (111 aa).

The segment at 86 to 111 is disordered; it reads APAAAAAKKDEPEEEADDDMGFGLFD.

It belongs to the eukaryotic ribosomal protein P1/P2 family. P1 and P2 exist as dimers at the large ribosomal subunit. Post-translationally, phosphorylated.

In terms of biological role, plays an important role in the elongation step of protein synthesis. In Leishmania infantum, this protein is Large ribosomal subunit protein P2-2 (LIP').